The primary structure comprises 680 residues: MNFETSRCATLQYCPDPYIQRFVETPAHFSWKESYYRSTMSQSTQTNEFLSPEVFQHIWDFLEQPICSVQPIDLNFVDEPSEDGATNKIEISMDCIRMQDSDLSDPMWPQYTNLGLLNSMDQQIQNGSSSTSPYNTDHAQNSVTAPSPYAQPSSTFDALSPSPAIPSNTDYPGPHSFDVSFQQSSTAKSATWTYSTELKKLYCQIAKTCPIQIKVMTPPPQGAVIRAMPVYKKAEHVTEVVKRCPNHELSREFNEGQIAPPSHLIRVEGNSHAQYVEDPITGRQSVLVPYEPPQVGTEFTTVLYNFMCNSSCVGGMNRRPILIIVTLETRDGQVLGRRCFEARICACPGRDRKADEDSIRKQQVSDSTKNGDGTKRPFRQNTHGIQMTSIKKRRSPDDELLYLPVRGRETYEMLLKIKESLELMQYLPQHTIETYRQQQQQQHQHLLQKQTSIQSPSSYGNSSPPLNKMNSMNKLPSVSQLINPQQRNALTPTTIPDGMGANIPMMGTHMPMAGDMNGLSPTQALPPPLSMPSTSHCTPPPPYPTDCSIVSFLARLGCSSCLDYFTTQGLTTIYQIEHYSMDDLASLKIPEQFRHAIWKGILDHRQLHEFSSPSHLLRTPSSASTVSVGSSETRGERVIDAVRFTLRQTISFPPRDEWNDFNFDMDARRNKQQRIKEEGE.

A transcription activation region spans residues 1-107 (MNFETSRCAT…MQDSDLSDPM (107 aa)). Positions 123–157 (QIQNGSSSTSPYNTDHAQNSVTAPSPYAQPSSTFD) are enriched in polar residues. Residues 123-171 (QIQNGSSSTSPYNTDHAQNSVTAPSPYAQPSSTFDALSPSPAIPSNTDY) form a disordered region. The DNA-binding element occupies 170-362 (DYPGPHSFDV…KADEDSIRKQ (193 aa)). Positions 244, 247, 308, and 312 each coordinate Zn(2+). Over residues 351 to 360 (DRKADEDSIR) the composition is skewed to basic and acidic residues. Disordered stretches follow at residues 351–393 (DRKA…IKKR) and 435–472 (YRQQQQQQHQHLLQKQTSIQSPSSYGNSSPPLNKMNSM). Residues 352–388 (RKADEDSIRKQQVSDSTKNGDGTKRPFRQNTHGIQMT) form an interaction with HIPK2 region. 2 stretches are compositionally biased toward polar residues: residues 361-371 (KQQVSDSTKNG) and 379-389 (RQNTHGIQMTS). Positions 394–443 (RSPDDELLYLPVRGRETYEMLLKIKESLELMQYLPQHTIETYRQQQQQQH) are oligomerization. Residues 437-450 (QQQQQQHQHLLQKQ) show a composition bias toward low complexity. Residues 451–472 (TSIQSPSSYGNSSPPLNKMNSM) show a composition bias toward polar residues. The 67-residue stretch at 541-607 (PPYPTDCSIV…WKGILDHRQL (67 aa)) folds into the SAM domain. Residues 610–680 (FSSPSHLLRT…KQQRIKEEGE (71 aa)) form a transactivation inhibition region. Lys676 is covalently cross-linked (Glycyl lysine isopeptide (Lys-Gly) (interchain with G-Cter in SUMO)).

The protein belongs to the p53 family. In terms of assembly, binds DNA as a homotetramer. Isoform composition of the tetramer may determine transactivation activity. Isoforms Alpha and Gamma interact with HIPK2. Interacts with SSRP1, leading to stimulate coactivator activity. Isoform 1 and isoform 2 interact with WWP1. Interacts with PDS5A. Isoform 5 (via activation domain) interacts with NOC2L. The cofactor is Zn(2+). May be sumoylated. In terms of processing, ubiquitinated. Polyubiquitination involves WWP1 and leads to proteasomal degradation of this protein. Widely expressed, notably in heart, kidney, placenta, prostate, skeletal muscle, testis and thymus, although the precise isoform varies according to tissue type. Progenitor cell layers of skin, breast, eye and prostate express high levels of DeltaN-type isoforms. Isoform 10 is predominantly expressed in skin squamous cell carcinomas, but not in normal skin tissues.

The protein resides in the nucleus. Its function is as follows. Acts as a sequence specific DNA binding transcriptional activator or repressor. The isoforms contain a varying set of transactivation and auto-regulating transactivation inhibiting domains thus showing an isoform specific activity. Isoform 2 activates RIPK4 transcription. May be required in conjunction with TP73/p73 for initiation of p53/TP53 dependent apoptosis in response to genotoxic insults and the presence of activated oncogenes. Involved in Notch signaling by probably inducing JAG1 and JAG2. Plays a role in the regulation of epithelial morphogenesis. The ratio of DeltaN-type and TA*-type isoforms may govern the maintenance of epithelial stem cell compartments and regulate the initiation of epithelial stratification from the undifferentiated embryonal ectoderm. Required for limb formation from the apical ectodermal ridge. Activates transcription of the p21 promoter. In Homo sapiens (Human), this protein is Tumor protein 63 (TP63).